Reading from the N-terminus, the 2871-residue chain is Fibrillin-1 (2871 aa).

The first 24 residues, 1-24 (MRRGRLLEIALGFTVLLASYTSHG), serve as a signal peptide directing secretion. Positions 25-44 (ADANLEAGNVKETRASRAKR) are excised as a propeptide. Residues 45–81 (RGGGGHDALKGPNVCGSRYNAYCCPGWKTLPGGNQCI) form a fibrillin unique N-terminal (FUN) domain region. The N-terminal domain stretch occupies residues 45–450 (RGGGGHDALK…PPRVLPVNVT (406 aa)). 11 disulfide bridges follow: Cys-59–Cys-68, Cys-67–Cys-80, Cys-85–Cys-94, Cys-89–Cys-100, Cys-102–Cys-111, Cys-119–Cys-129, Cys-123–Cys-134, Cys-136–Cys-145, Cys-150–Cys-160, Cys-154–Cys-166, and Cys-168–Cys-177. EGF-like domains follow at residues 81–112 (IVPI…PSCG), 115–146 (SIQH…THCG), and 147–178 (QPVC…PQCE). The segment at 119 to 329 (CNIRCMNGGS…YTSPDGTRCI (211 aa)) is interaction with MFAP4. The TB 1 domain occupies 184–236 (GPCFTVISNQMCQGQLSGIVCTKTLCCATVGRAWGHPCEMCPAQPHPCRRGFI). The segment at 195 to 221 (CQGQLSGIVCTKTLCCATVGRAWGHPC) is hybrid domain 1. Residues 246 to 287 (DVDECQAIPGLCQGGNCINTVGSFECKCPAGHKLNEVSQKCE) form the EGF-like 4; calcium-binding domain. 6 disulfides stabilise this stretch: Cys-250-Cys-262, Cys-257-Cys-271, Cys-273-Cys-286, Cys-292-Cys-304, Cys-299-Cys-313, and Cys-315-Cys-328. Residue Ser-268 is glycosylated (O-linked (Glc) serine). The EGF-like 5; calcium-binding domain occupies 288–329 (DIDECSTIPGICEGGECTNTVSSYFCKCPPGFYTSPDGTRCI). Residues 334 to 389 (GYCYTALTNGRCSNQLPQSITKMQCCCDAGRCWSPGVTVAPEMCPIRATEDFNKLC) enclose the TB 2 domain. A glycan (N-linked (GlcNAc...) asparagine) is linked at Asn-448. Residues 449–489 (VTDYCQLVRYLCQNGRCIPTPGSYRCECNKGFQLDLRGECI) form the EGF-like 6 domain. 15 disulfide bridges follow: Cys-453-Cys-465, Cys-460-Cys-474, Cys-476-Cys-488, Cys-494-Cys-504, Cys-499-Cys-513, Cys-515-Cys-528, Cys-534-Cys-546, Cys-541-Cys-555, Cys-557-Cys-570, Cys-576-Cys-587, Cys-582-Cys-596, Cys-598-Cys-611, Cys-617-Cys-628, Cys-623-Cys-637, and Cys-639-Cys-652. Ser-471 is a glycosylation site (O-linked (Glc) serine). Residues 490–529 (DVDECEKNPCAGGECINNQGSYTCQCRAGYQSTLTRTECR) enclose the EGF-like 7; calcium-binding domain. Ser-510 carries an O-linked (Glc) serine glycan. Positions 530-571 (DIDECLQNGRICNNGRCINTDGSFHCVCNAGFHVTRDGKNCE) constitute an EGF-like 8; calcium-binding domain. Ser-552 carries O-linked (Glc) serine glycosylation. The EGF-like 9; calcium-binding domain maps to 572–612 (DMDECSIRNMCLNGMCINEDGSFKCICKPGFQLASDGRYCK). Residue Ser-593 is glycosylated (O-linked (Glc) serine). The EGF-like 10; calcium-binding domain occupies 613–653 (DINECETPGICMNGRCVNTDGSYRCECFPGLAVGLDGRVCV). Residue Ser-634 is glycosylated (O-linked (Glc) serine). Residues 659-711 (STCYGGYKRGQCIKPLFGAVTKSECCCASTEYAFGEPCQPCPAQNSAEYQALC) enclose the TB 3 domain. Residues 723-764 (DINECALDPDICPNGICENLRGTYKCICNSGYEVDSTGKNCV) enclose the EGF-like 11; calcium-binding domain. 16 disulfides stabilise this stretch: Cys-727–Cys-739, Cys-734–Cys-748, Cys-750–Cys-763, Cys-769–Cys-781, Cys-776–Cys-790, Cys-792–Cys-805, Cys-811–Cys-821, Cys-816–Cys-830, Cys-832–Cys-845, Cys-853–Cys-875, Cys-862–Cys-887, Cys-876–Cys-890, Cys-896–Cys-908, Cys-914–Cys-926, Cys-921–Cys-935, and Cys-937–Cys-950. One can recognise an EGF-like 12; calcium-binding domain in the interval 765 to 806 (DINECVLNSLLCDNGQCRNTPGSFVCTCPKGFIYKPDLKTCE). An O-linked (Glc) serine glycan is attached at Ser-787. One can recognise an EGF-like 13; calcium-binding domain in the interval 807-846 (DIDECESSPCINGVCKNSPGSFICECSSESTLDPTKTICI). The O-linked (Glc) serine glycan is linked to Ser-827. One can recognise a TB 4 domain in the interval 851–902 (GTCWQTVIDGRCEININGATLKSQCCSSLGAAWGSPCTLCQVDPICGKGYSR). Residues 862 to 887 (CEININGATLKSQCCSSLGAAWGSPC) form a hybrid domain 2 region. One can recognise an EGF-like 14; calcium-binding domain in the interval 910 to 951 (DIDECEVFPGVCKNGLCVNTRGSFKCQCPSGMTLDATGRICL). Residues 956 to 1008 (ETCFLRYEDEECTLPIAGRHRMDACCCSVGAAWGTEECEECPMRNTPEYEELC) form the TB 5 domain. The 42-residue stretch at 1028–1069 (DINECKMIPSLCTHGKCRNTIGSFKCRCDSGFALDSEERNCT) folds into the EGF-like 15; calcium-binding domain. Disulfide bonds link Cys-1032/Cys-1044, Cys-1039/Cys-1053, Cys-1055/Cys-1068, Cys-1074/Cys-1086, Cys-1081/Cys-1095, Cys-1097/Cys-1111, Cys-1117/Cys-1129, Cys-1124/Cys-1138, Cys-1140/Cys-1153, Cys-1159/Cys-1171, Cys-1166/Cys-1180, Cys-1182/Cys-1195, Cys-1201/Cys-1212, Cys-1208/Cys-1221, Cys-1223/Cys-1236, Cys-1242/Cys-1254, Cys-1249/Cys-1263, Cys-1265/Cys-1278, Cys-1284/Cys-1296, Cys-1291/Cys-1305, Cys-1307/Cys-1320, Cys-1326/Cys-1339, Cys-1333/Cys-1348, Cys-1350/Cys-1361, Cys-1367/Cys-1380, Cys-1374/Cys-1389, Cys-1391/Cys-1402, Cys-1408/Cys-1420, Cys-1415/Cys-1429, Cys-1431/Cys-1444, Cys-1450/Cys-1461, Cys-1456/Cys-1470, Cys-1472/Cys-1485, Cys-1491/Cys-1502, Cys-1497/Cys-1511, Cys-1513/Cys-1526, Cys-1534/Cys-1562, Cys-1549/Cys-1574, Cys-1563/Cys-1577, Cys-1564/Cys-1589, Cys-1610/Cys-1622, Cys-1617/Cys-1631, Cys-1633/Cys-1646, Cys-1652/Cys-1663, Cys-1658/Cys-1672, and Cys-1674/Cys-1687. O-linked (Glc) serine glycosylation occurs at Ser-1050. Asn-1067 is a glycosylation site (N-linked (GlcNAc...) asparagine). One can recognise an EGF-like 16; calcium-binding domain in the interval 1070–1112 (DIDECRISPDLCGRGQCVNTPGDFECKCDEGYESGFMMMKNCM). The region spanning 1113 to 1154 (DIDECQRDPLLCRGGVCHNTEGSYRCECPPGHQLSPNISACI) is the EGF-like 17; calcium-binding domain. Ser-1135 carries an O-linked (Glc) serine glycan. Asn-1149 is a glycosylation site (N-linked (GlcNAc...) asparagine). Residues 1155–1196 (DINECELSAHLCPNGRCVNLIGKYQCACNPGYHSTPDRLFCV) form the EGF-like 18; calcium-binding domain. In terms of domain architecture, EGF-like 19; calcium-binding spans 1197–1237 (DIDECSIMNGGCETFCTNSEGSYECSCQPGFALMPDQRSCT). Residue Ser-1218 is glycosylated (O-linked (Glc) serine). An EGF-like 20; calcium-binding domain is found at 1238–1279 (DIDECEDNPNICDGGQCTNIPGEYRCLCYDGFMASEDMKTCV). One can recognise an EGF-like 21; calcium-binding domain in the interval 1280–1321 (DVNECDLNPNICLSGTCENTKGSFICHCDMGYSGKKGKTGCT). The O-linked (Glc) serine glycan is linked to Ser-1302. One can recognise an EGF-like 22; calcium-binding domain in the interval 1322 to 1362 (DINECEIGAHNCGKHAVCTNTAGSFKCSCSPGWIGDGIKCT). The O-linked (Glc) serine glycan is linked to Ser-1345. One can recognise an EGF-like 23; calcium-binding domain in the interval 1363–1403 (DLDECSNGTHMCSQHADCKNTMGSYRCLCKEGYTGDGFTCT). Asn-1369 carries an N-linked (GlcNAc...) asparagine glycan. Residue Ser-1386 is glycosylated (O-linked (Glc) serine). The region spanning 1404–1445 (DLDECSENLNLCGNGQCLNAPGGYRCECDMGFVPSADGKACE) is the EGF-like 24; calcium-binding domain. An EGF-like 25; calcium-binding domain is found at 1446-1486 (DIDECSLPNICVFGTCHNLPGLFRCECEIGYELDRSGGNCT). N-linked (GlcNAc...) asparagine glycosylation occurs at Asn-1484. The 41-residue stretch at 1487-1527 (DVNECLDPTTCISGNCVNTPGSYICDCPPDFELNPTRVGCV) folds into the EGF-like 26; calcium-binding domain. Residue Ser-1508 is glycosylated (O-linked (Glc) serine). The tract at residues 1528-2731 (DTRSGNCYLD…GYPKRGRKRR (1204 aa)) is C-terminal domain. A TB 6 domain is found at 1532 to 1589 (GNCYLDIRPRGDNGDTACSNEIGVGVSKASCCCSLGKAWGTPCEMCPAVNTSEYKILC). The short motif at 1541–1543 (RGD) is the Cell attachment site element. Asn-1581 is a glycosylation site (N-linked (GlcNAc...) asparagine). In terms of domain architecture, EGF-like 27; calcium-binding spans 1606–1647 (DIDECQELPGLCQGGKCINTFGSFQCRCPTGYYLNEDTRVCD). O-linked (Glc) serine glycosylation is present at Ser-1628. The EGF-like 28; calcium-binding domain maps to 1648-1688 (DVNECETPGICGPGTCYNTVGNYTCICPPDYMQVNGGNNCM). N-linked (GlcNAc...) asparagine glycosylation occurs at Asn-1669. Residues 1693-1748 (SLCYRNYYADNQTCDGELLFNMTKKMCCCSYNIGRAWNKPCEQCPIPSTDEFATLC) enclose the TB 7 domain. N-linked (GlcNAc...) asparagine glycans are attached at residues Asn-1703 and Asn-1713. Residues 1766-1807 (DIDECREIPGVCENGVCINMVGSFRCECPVGFFYNDKLLVCE) enclose the EGF-like 29; calcium-binding domain. Cystine bridges form between Cys-1770–Cys-1782, Cys-1777–Cys-1791, Cys-1793–Cys-1806, Cys-1812–Cys-1824, Cys-1818–Cys-1833, Cys-1835–Cys-1847, Cys-1853–Cys-1865, Cys-1860–Cys-1874, Cys-1876–Cys-1889, Cys-1895–Cys-1905, Cys-1900–Cys-1914, Cys-1916–Cys-1928, Cys-1934–Cys-1947, Cys-1942–Cys-1956, Cys-1958–Cys-1971, Cys-1977–Cys-1989, Cys-1984–Cys-1998, Cys-2000–Cys-2011, Cys-2017–Cys-2029, Cys-2024–Cys-2038, Cys-2040–Cys-2053, Cys-2061–Cys-2083, Cys-2070–Cys-2096, Cys-2084–Cys-2099, Cys-2085–Cys-2111, Cys-2131–Cys-2142, Cys-2137–Cys-2151, Cys-2153–Cys-2164, Cys-2170–Cys-2181, Cys-2176–Cys-2190, Cys-2192–Cys-2204, Cys-2210–Cys-2221, Cys-2217–Cys-2230, Cys-2232–Cys-2245, Cys-2251–Cys-2265, Cys-2258–Cys-2274, Cys-2276–Cys-2289, Cys-2295–Cys-2307, Cys-2302–Cys-2316, and Cys-2318–Cys-2331. Residues 1808–1848 (DIDECQNGPVCQRNAECINTAGSYRCDCKPGYRFTSTGQCN) form the EGF-like 30; calcium-binding domain. Ser-1830 is a glycosylation site (O-linked (Glc) serine). Positions 1849–1890 (DRNECQEIPNICSHGQCIDTVGSFYCLCHTGFKTNDDQTMCL) constitute an EGF-like 31; calcium-binding domain. O-linked (Glc) serine glycosylation occurs at Ser-1871. Residues 1891-1929 (DINECERDACGNGTCRNTIGSFNCRCNHGFILSHNNDCI) form the EGF-like 32; calcium-binding domain. Asn-1902 is a glycosylation site (N-linked (GlcNAc...) asparagine). O-linked (Glc) serine glycosylation is present at Ser-1911. The EGF-like 33; calcium-binding domain occupies 1930–1972 (DVDECASGNGNLCRNGQCINTVGSFQCQCNEGYEVAPDGRTCV). An O-linked (Glc) serine glycan is attached at Ser-1953. The EGF-like 34; calcium-binding domain maps to 1973–2012 (DINECLLEPRKCAPGTCQNLDGSYRCICPPGYSLQNEKCE). One can recognise an EGF-like 35; calcium-binding domain in the interval 2013 to 2054 (DIDECVEEPEICALGTCSNTEGSFKCLCPEGFSLSSSGRRCQ). Residue Ser-2035 is glycosylated (O-linked (Glc) serine). Residues 2059–2111 (SYCYAKFEGGKCSSPKSRNHSKQECCCALKGEGWGDPCELCPTEPDEAFRQIC) enclose the TB 8 domain. An N-linked (GlcNAc...) asparagine glycan is attached at Asn-2077. Positions 2127–2165 (DMDECKEPDVCKHGQCINTDGSYRCECPFGYILAGNECV) constitute an EGF-like 36; calcium-binding domain. Ser-2148 carries an O-linked (Glc) serine glycan. The 40-residue stretch at 2166–2205 (DTDECSVGNPCGNGTCKNVIGGFECTCEEGFEPGPMMTCE) folds into the EGF-like 37; calcium-binding domain. Asn-2178 carries an N-linked (GlcNAc...) asparagine glycan. In terms of domain architecture, EGF-like 38; calcium-binding spans 2206–2246 (DINECAQNPLLCAFRCVNTYGSYECKCPVGYVLREDRRMCK). O-linked (Glc) serine glycosylation occurs at Ser-2227. The region spanning 2247-2290 (DEDECEEGKHDCTEKQMECKNLIGTYMCICGPGYQRRPDGEGCV) is the EGF-like 39; calcium-binding domain. The region spanning 2291 to 2332 (DENECQTKPGICENGRCLNTRGSYTCECNDGFTASPNQDECL) is the EGF-like 40; calcium-binding domain. Ser-2313 is a glycosylation site (O-linked (Glc) serine). The TB 9 domain occupies 2337–2390 (GYCFTEVLQNMCQIGSSNRNPVTKSECCCDGGRGWGPHCEICPFQGTVAFKKLC). Residues 2402-2443 (DIDECKVIHDVCRNGECVNDRGSYHCICKTGYTPDITGTSCV) form the EGF-like 41; calcium-binding domain. Disulfide bonds link Cys-2406/Cys-2418, Cys-2413/Cys-2427, Cys-2429/Cys-2442, Cys-2448/Cys-2459, Cys-2455/Cys-2468, Cys-2470/Cys-2483, Cys-2489/Cys-2500, Cys-2496/Cys-2509, Cys-2511/Cys-2522, Cys-2528/Cys-2541, Cys-2535/Cys-2550, Cys-2552/Cys-2565, Cys-2571/Cys-2581, Cys-2577/Cys-2590, Cys-2592/Cys-2605, Cys-2611/Cys-2622, Cys-2617/Cys-2631, Cys-2633/Cys-2646, Cys-2652/Cys-2663, Cys-2659/Cys-2672, and Cys-2674/Cys-2686. One can recognise an EGF-like 42; calcium-binding domain in the interval 2444–2484 (DLNECNQAPKPCNFICKNTEGSYQCSCPKGYILQEDGRSCK). O-linked (Glc) serine glycosylation occurs at Ser-2465. Positions 2485–2523 (DLDECATKQHNCQFLCVNTIGGFTCKCPPGFTQHHTSCI) constitute an EGF-like 43; calcium-binding domain. Residues 2524–2566 (DNNECTSDINLCGSKGICQNTPGSFTCECQRGFSLDQTGSSCE) form the EGF-like 44; calcium-binding domain. The O-linked (Glc) serine glycan is linked to Ser-2547. The EGF-like 45; calcium-binding domain occupies 2567 to 2606 (DVDECEGNHRCQHGCQNIIGGYRCSCPQGYLQHYQWNQCV). Positions 2607–2647 (DENECLSAHICGGASCHNTLGSYKCMCPAGFQYEQFSGGCQ) constitute an EGF-like 46; calcium-binding domain. O-linked (Glc) serine glycosylation is present at Ser-2628. The 40-residue stretch at 2648–2687 (DINECGSAQAPCSYGCSNTEGGYLCGCPPGYFRIGQGHCV) folds into the EGF-like 47; calcium-binding domain. Residue Ser-2702 is modified to Phosphoserine; by FAM20C. A Phosphoserine modification is found at Ser-2709. Residues 2726–2746 (RGRKRRSTNETDASNIEDQSE) are disordered. Residue Asn-2734 is glycosylated (N-linked (GlcNAc...) asparagine). A compositionally biased stretch (polar residues) spans 2735 to 2746 (ETDASNIEDQSE). 2 N-linked (GlcNAc...) asparagine glycosylation sites follow: Asn-2750 and Asn-2767.

This sequence belongs to the fibrillin family. In terms of assembly, interacts with COL16A1. Interacts with integrin alpha-V/beta-3. Interacts with ADAMTS10; this interaction promotes microfibril assembly. Interacts with THSD4; this interaction promotes fibril formation. Interacts (via N-terminal domain) with FBLN2 and FBLN5. Interacts with ELN. Forms a ternary complex with ELN and FBLN2 or FBLN5 and a significant interaction with ELN seen only in the presence of FBLN2 or FBLN5. Interacts (via N-terminal domain) with LTBP2 (via C-terminal domain) in a Ca(+2)-dependent manner. Interacts (via N-terminal domain) with LTBP1 (via C-terminal domain). Interacts with integrins ITGA5:ITGB1, ITGAV:ITGB3 and ITGAV:ITGB6. Interacts (via N-terminal domain) with BMP2, BMP4, BMP7, BMP10 and GDF5. Interacts (via N-terminal domain) with MFAP2 and MFAP5. Interacts with ADAMTSL5. Interacts with MFAP4. Interacts (via N-terminal domain) with TNFSF11 in a Ca(+2)-dependent manner. Interacts (via N-terminal domain) with EFEMP2; this interaction inhibits EFEMP2 binding to LOX and ELN. Cleavage of N- and C-terminus by furin is required for incorporation into the extracellular matrix and assembly into microfibrils. The C-terminus, which corresponds to the Asprosin chain, was initially thought to constitute a propeptide. Fibrillin-1 and Asprosin chains are still linked together during the secretion from cells, but are subsequently separated by furin, an essential step for incorporation of Fibrillin-1 into the nascent microfibrils. In terms of processing, forms intermolecular disulfide bonds either with other fibrillin-1 molecules or with other components of the microfibrils. Post-translationally, O-glycosylated on serine residues by POGLUT2 and POGLUT3 which is necessary for efficient protein secretion.

The protein localises to the secreted. It localises to the extracellular space. Its subcellular location is the extracellular matrix. Its function is as follows. Structural component of the 10-12 nm diameter microfibrils of the extracellular matrix, which conveys both structural and regulatory properties to load-bearing connective tissues. Fibrillin-1-containing microfibrils provide long-term force bearing structural support. In tissues such as the lung, blood vessels and skin, microfibrils form the periphery of the elastic fiber, acting as a scaffold for the deposition of elastin. In addition, microfibrils can occur as elastin-independent networks in tissues such as the ciliary zonule, tendon, cornea and glomerulus where they provide tensile strength and have anchoring roles. Fibrillin-1 also plays a key role in tissue homeostasis through specific interactions with growth factors, such as the bone morphogenetic proteins (BMPs), growth and differentiation factors (GDFs) and latent transforming growth factor-beta-binding proteins (LTBPs), cell-surface integrins and other extracellular matrix protein and proteoglycan components. Regulates osteoblast maturation by controlling TGF-beta bioavailability and calibrating TGF-beta and BMP levels, respectively. Negatively regulates osteoclastogenesis by binding and sequestering an osteoclast differentiation and activation factor TNFSF11. This leads to disruption of TNFSF11-induced Ca(2+) signaling and impairment of TNFSF11-mediated nuclear translocation and activation of transcription factor NFATC1 which regulates genes important for osteoclast differentiation and function. Mediates cell adhesion via its binding to cell surface receptors integrins ITGAV:ITGB3 and ITGA5:ITGB1. Binds heparin and this interaction has an important role in the assembly of microfibrils. Adipokine secreted by white adipose tissue that plays an important regulatory role in the glucose metabolism of liver, muscle and pancreas. Hormone that targets the liver in response to fasting to increase plasma glucose levels. Binds the olfactory receptor OR4M1 at the surface of hepatocytes and promotes hepatocyte glucose release by activating the protein kinase A activity in the liver, resulting in rapid glucose release into the circulation. May act as a regulator of adaptive thermogenesis by inhibiting browning and energy consumption, while increasing lipid deposition in white adipose tissue. Also acts as an orexigenic hormone that increases appetite: crosses the blood brain barrier and exerts effects on the hypothalamus. In the arcuate nucleus of the hypothalamus, asprosin directly activates orexigenic AgRP neurons and indirectly inhibits anorexigenic POMC neurons, resulting in appetite stimulation. Activates orexigenic AgRP neurons via binding to the olfactory receptor OR4M1. May also play a role in sperm motility in testis via interaction with OR4M1 receptor. This Homo sapiens (Human) protein is Fibrillin-1.